We begin with the raw amino-acid sequence, 563 residues long: IQCJ-SCHIP1 readthrough transcript protein (563 aa).

Residues 47-67 enclose the IQ domain; it reads ESKVKIIQRAWREYLQRQEPL. 4 disordered regions span residues 63 to 150, 164 to 295, 312 to 336, and 384 to 430; these read RQEP…VSAL, VIDE…EPPV, FREQ…NERE, and SGSD…SLDD. The span at 76 to 87 shows a compositional bias: low complexity; that stretch reads SVSSEKLSSSVS. Positions 88 to 97 are enriched in polar residues; that stretch reads MNTFSDSSTP. The span at 108 to 143 shows a compositional bias: low complexity; the sequence is SDAGSSSSSSRASSQSNSTKVTPCSECKSSSSPGGS. Over residues 168-182 the composition is skewed to acidic residues; the sequence is WAPEEDGEEEEEEDE. Composition is skewed to basic and acidic residues over residues 183–199 and 229–238; these read RDQR…REPG and HQHDPQDLRH. Ser193 is subject to Phosphoserine. Polar residues predominate over residues 318–331; it reads RNQGQARTNSTSAQ. Over residues 385–399 the composition is skewed to basic and acidic residues; it reads GSDKDSDADDSKTET. Residues 400-411 show a composition bias toward polar residues; that stretch reads SLDTPLSPMSKQ. The interval 419–563 is required for interaction with ankyrins; that stretch reads DTTEEESESL…KHMAEKMPAK (145 aa). Acidic residues predominate over residues 420-430; that stretch reads TTEEESESLDD. The stretch at 500-534 forms a coiled coil; that stretch reads IGQLQVIVNDLHSQIESLNEELVQLLLIRDELHTE.

In terms of assembly, homooligomer (via coiled coil domain). Interacts (via IQ domain) with calmodulin; the interaction is direct and lost in presence of calcium. Interacts with ANK3 (via ANK repeats); required for localization at axon initial segments (AIS) and nodes of Ranvier. Interacts with SPTBN4. Interacts with KCNQ2 and KCNQ3. As to expression, highly expressed in brain and to a lower extent in heart and kidney.

The protein resides in the cell projection. It is found in the axon. It localises to the cytoplasm. Functionally, may play a role in action potential conduction in myelinated cells through the organization of molecular complexes at nodes of Ranvier and axon initial segments. May also play a role in axon outgrowth and guidance. In Homo sapiens (Human), this protein is IQCJ-SCHIP1 readthrough transcript protein.